A 540-amino-acid chain; its full sequence is DM7 family protein GM11956 (540 aa).

The tract at residues 416–443 is disordered; it reads ATDTRGRDEIRTSCDQPQEKDEGSAEAD. Basic and acidic residues predominate over residues 417-443; that stretch reads TDTRGRDEIRTSCDQPQEKDEGSAEAD.

It belongs to the DM7 family.

The protein is DM7 family protein GM11956 of Drosophila sechellia (Fruit fly).